Reading from the N-terminus, the 89-residue chain is Heat shock protein 30A (89 aa).

Basic and acidic residues-rich tracts occupy residues 1–11 and 19–39; these read MRNNVERRMQR and LSKD…RESE. The tract at residues 1–55 is disordered; sequence MRNNVERRMQRVNEACRLLSKDTEMRRITDQNRQSRESEGTSPNSGKDGKDHFEL. One can recognise a sHSP domain in the interval 35-89; the sequence is SRESEGTSPNSGKDGKDHFELTLNVRDFSPHELTVKTQGRRVIVTGKHERKSDTE.

This sequence belongs to the small heat shock protein (HSP20) family.

In Xenopus laevis (African clawed frog), this protein is Heat shock protein 30A (hsp30a).